Reading from the N-terminus, the 193-residue chain is ATP synthase subunit b 2 (193 aa).

Residues 44–64 (IFWLVLTLLAIYFVLTKIALP) traverse the membrane as a helical segment.

It belongs to the ATPase B chain family. F-type ATPases have 2 components, F(1) - the catalytic core - and F(0) - the membrane proton channel. F(1) has five subunits: alpha(3), beta(3), gamma(1), delta(1), epsilon(1). F(0) has three main subunits: a(1), b(2) and c(10-14). The alpha and beta chains form an alternating ring which encloses part of the gamma chain. F(1) is attached to F(0) by a central stalk formed by the gamma and epsilon chains, while a peripheral stalk is formed by the delta and b chains.

Its subcellular location is the cell inner membrane. Functionally, f(1)F(0) ATP synthase produces ATP from ADP in the presence of a proton or sodium gradient. F-type ATPases consist of two structural domains, F(1) containing the extramembraneous catalytic core and F(0) containing the membrane proton channel, linked together by a central stalk and a peripheral stalk. During catalysis, ATP synthesis in the catalytic domain of F(1) is coupled via a rotary mechanism of the central stalk subunits to proton translocation. Component of the F(0) channel, it forms part of the peripheral stalk, linking F(1) to F(0). The b'-subunit is a diverged and duplicated form of b found in plants and photosynthetic bacteria. This Jannaschia sp. (strain CCS1) protein is ATP synthase subunit b 2 (atpF2).